A 963-amino-acid polypeptide reads, in one-letter code: IQ motif and SEC7 domain-containing protein 1 (963 aa).

The tract at residues 21–88 is disordered; it reads SGVEGEAPSS…TRRPKLQHST (68 aa). Residues 29-38 are compositionally biased toward polar residues; the sequence is SSETGTSLDS. Serine 89, serine 105, and serine 107 each carry phosphoserine. The 30-residue stretch at 134–163 folds into the IQ domain; that stretch reads TRHAARTIQTAFRQYQMNKNFERLRSSMSE. Residues serine 180, serine 249, and serine 253 each carry the phosphoserine modification. Disordered regions lie at residues 312-332 and 349-513; these read LSPP…ESDL and KEDK…RNSW. 2 stretches are compositionally biased toward basic and acidic residues: residues 366–376 and 430–446; these read ERQEQRLRVEH and LPRE…RPLD. The segment covering 471–489 has biased composition (low complexity); it reads DSINSTSNSNDTINCSSES. Phosphoserine occurs at positions 512 and 515. The SEC7 domain maps to 517-710; sequence AFSNDVIRKR…MGIYERIRKR (194 aa). The 93-residue stretch at 774 to 866 folds into the PH domain; the sequence is HQREIFLFND…LRESIAEVQE (93 aa). Residues 848-879 adopt a coiled-coil conformation; it reads QDRKKFTDDLRESIAEVQEMEKHRIESELEKQ. At serine 892 the chain carries Phosphoserine. Phosphotyrosine is present on tyrosine 911. Residues 922 to 947 form a disordered region; that stretch reads LSSSLRDLSEAGKRGRRSSAGSLESN. Residues serine 924 and serine 925 each carry the phosphoserine modification.

This sequence belongs to the BRAG family. As to quaternary structure, interacts with ARF1 and ARF6. Interacts with GRIA2; the interaction is required for ARF6 activation. As to expression, expressed in brain, ovary, heart, lung, liver, kidney and leukocytes. Moderate expression was also detected in lung, skeletal muscle, placenta, small intestine, pancreas, spleen and testis.

The protein resides in the cytoplasm. Its subcellular location is the nucleus. It is found in the postsynaptic density. The protein localises to the cytoplasmic vesicle. It localises to the secretory vesicle. The protein resides in the synaptic vesicle. In terms of biological role, guanine nucleotide exchange factor for ARF1 and ARF6. Guanine nucleotide exchange factor activity is enhanced by lipid binding. Accelerates GTP binding by ARFs of all three classes. Guanine nucleotide exchange protein for ARF6, mediating internalization of beta-1 integrin. Involved in neuronal development. In neurons, plays a role in the control of vesicle formation by endocytoc cargo. Upon long term depression, interacts with GRIA2 and mediates the activation of ARF6 to internalize synaptic AMPAR receptors. In Homo sapiens (Human), this protein is IQ motif and SEC7 domain-containing protein 1.